A 507-amino-acid chain; its full sequence is Cytochrome P450 monooxygenase tpeC (507 aa).

The chain crosses the membrane as a helical span at residues 24-44 (TLAIALIVGFVILKAIYNVFF). C449 is a heme binding site.

Belongs to the cytochrome P450 family. The cofactor is heme.

The protein localises to the membrane. The protein operates within secondary metabolite biosynthesis. In terms of biological role, cytochrome P450 monooxygenase; part of the gene cluster that mediates the biosynthesis of polyesters containing 2,4-dihydroxy-6-(2-hydroxypropyl)benzoate and 3-hydroxybutyrate moieties, such as talapolyester G, 15G256beta and 15G256beta-2; as well as to oxidized derivatives such as 15G256alpha. The biosynthesis of the polyesters probably starts with the formation of the diketide 3-hydroxybutyryl-S-ACP catalyzed by the partially reducing polyketide synthase tpeA. The acceptance of 3-hydroxybutyryl by the non-reducing polyketide synthase tpeB would initiate further elongation and cyclization, catalyzed by KS and PT, respectively, to form 2,4-dihydroxy-6-(2-hydroxyn-propyl)benzoyl-S-ACP intermediate. The TE domain could catalyze lactonization at this step to yield 6-hydroxymellein as a derailment product. The polyesterification process maybe occurs when additional molecules of 3-hydroxybutyryl are transferred to tpeB. Following the first esterification step, an intramolecular cyclization catalyzed by the TE domain of tpeB would give talarodioxadione 1, whereas the ethyl esterification of talapolyester G perhaps happens spontaneously. Further oxidation by the cytochrome P450 monooxygenase tpeC then leads to the formation of oxidized derivatives. The sequence is that of Cytochrome P450 monooxygenase tpeC from Talaromyces stipitatus (strain ATCC 10500 / CBS 375.48 / QM 6759 / NRRL 1006) (Penicillium stipitatum).